The sequence spans 355 residues: UDP-N-acetylglucosamine--N-acetylmuramyl-(pentapeptide) pyrophosphoryl-undecaprenol N-acetylglucosamine transferase (355 aa).

UDP-N-acetyl-alpha-D-glucosamine is bound by residues 12–14 (TGG), Asn124, Arg163, Ser191, Ile243, 262–267 (ALTVAE), and Gln288.

This sequence belongs to the glycosyltransferase 28 family. MurG subfamily.

The protein localises to the cell inner membrane. The enzyme catalyses di-trans,octa-cis-undecaprenyl diphospho-N-acetyl-alpha-D-muramoyl-L-alanyl-D-glutamyl-meso-2,6-diaminopimeloyl-D-alanyl-D-alanine + UDP-N-acetyl-alpha-D-glucosamine = di-trans,octa-cis-undecaprenyl diphospho-[N-acetyl-alpha-D-glucosaminyl-(1-&gt;4)]-N-acetyl-alpha-D-muramoyl-L-alanyl-D-glutamyl-meso-2,6-diaminopimeloyl-D-alanyl-D-alanine + UDP + H(+). The protein operates within cell wall biogenesis; peptidoglycan biosynthesis. Cell wall formation. Catalyzes the transfer of a GlcNAc subunit on undecaprenyl-pyrophosphoryl-MurNAc-pentapeptide (lipid intermediate I) to form undecaprenyl-pyrophosphoryl-MurNAc-(pentapeptide)GlcNAc (lipid intermediate II). In Tolumonas auensis (strain DSM 9187 / NBRC 110442 / TA 4), this protein is UDP-N-acetylglucosamine--N-acetylmuramyl-(pentapeptide) pyrophosphoryl-undecaprenol N-acetylglucosamine transferase.